Reading from the N-terminus, the 145-residue chain is D-aminoacyl-tRNA deacylase (145 aa).

The Gly-cisPro motif, important for rejection of L-amino acids motif lies at 137-138; that stretch reads GP.

The protein belongs to the DTD family. In terms of assembly, homodimer.

The protein resides in the cytoplasm. The enzyme catalyses glycyl-tRNA(Ala) + H2O = tRNA(Ala) + glycine + H(+). The catalysed reaction is a D-aminoacyl-tRNA + H2O = a tRNA + a D-alpha-amino acid + H(+). In terms of biological role, an aminoacyl-tRNA editing enzyme that deacylates mischarged D-aminoacyl-tRNAs. Also deacylates mischarged glycyl-tRNA(Ala), protecting cells against glycine mischarging by AlaRS. Acts via tRNA-based rather than protein-based catalysis; rejects L-amino acids rather than detecting D-amino acids in the active site. By recycling D-aminoacyl-tRNA to D-amino acids and free tRNA molecules, this enzyme counteracts the toxicity associated with the formation of D-aminoacyl-tRNA entities in vivo and helps enforce protein L-homochirality. This Ruegeria pomeroyi (strain ATCC 700808 / DSM 15171 / DSS-3) (Silicibacter pomeroyi) protein is D-aminoacyl-tRNA deacylase.